The following is a 422-amino-acid chain: UDP-N-acetylmuramoylalanine--D-glutamate ligase (422 aa).

102–108 (GTNGKTT) provides a ligand contact to ATP.

This sequence belongs to the MurCDEF family.

Its subcellular location is the cytoplasm. The enzyme catalyses UDP-N-acetyl-alpha-D-muramoyl-L-alanine + D-glutamate + ATP = UDP-N-acetyl-alpha-D-muramoyl-L-alanyl-D-glutamate + ADP + phosphate + H(+). It participates in cell wall biogenesis; peptidoglycan biosynthesis. Functionally, cell wall formation. Catalyzes the addition of glutamate to the nucleotide precursor UDP-N-acetylmuramoyl-L-alanine (UMA). The chain is UDP-N-acetylmuramoylalanine--D-glutamate ligase from Helicobacter pylori (strain J99 / ATCC 700824) (Campylobacter pylori J99).